The following is a 288-amino-acid chain: Histone H3-like centromeric protein hcp-3 (288 aa).

Positions 96 to 194 (YHARKEQARR…VTKTRRYRPG (99 aa)) are disordered. Over residues 178–193 (MRAGRNRVTKTRRYRP) the composition is skewed to basic residues. Residues 191 to 288 (YRPGQKALEE…LYRRLCLRHL (98 aa)) are H3-like.

Belongs to the histone H3 family. Forms a nucleosome-like histone octamer containing two molecules each of H2A, H2B, hcp-3 and H4 assembled in one hcp-3-H4 heterotetramer and two H2A-H2B heterodimers. The hcp-3-H4 heterotetramer is more compact and structurally more rigid than corresponding H3-H4 heterotetramers. Interacts with knl-2. Interacts with lin-53.

The protein localises to the nucleus. Its subcellular location is the chromosome. The protein resides in the centromere. It is found in the kinetochore. Functionally, histone H3-like variant which exclusively replaces conventional H3 in the nucleosome core of centromeric chromatin at the inner plate of the kinetochore. Required for recruitment and assembly of kinetochore proteins, mitotic progression and chromosome segregation. May serve as an epigenetic mark that propagates centromere identity through replication and cell division. Might promote cleavage furrow stability during cytokinesis. Not required for chromosome segregation during meiosis. This is Histone H3-like centromeric protein hcp-3 from Caenorhabditis elegans.